Reading from the N-terminus, the 734-residue chain is Photosystem I P700 chlorophyll a apoprotein A2 (734 aa).

The next 8 helical transmembrane spans lie at 46 to 69 (IFAS…FHVA), 135 to 158 (LYTG…LHLQ), 175 to 199 (LNHH…HVAI), 273 to 291 (IAHH…GHMY), 330 to 353 (IHFQ…QHMY), 369 to 395 (AALY…IFFI), 417 to 439 (AIIS…LYVH), and 517 to 535 (FLVH…LILV). [4Fe-4S] cluster-binding residues include Cys-559 and Cys-568. A run of 2 helical transmembrane segments spans residues 575–596 (AFYL…YWHW) and 643–665 (LSVW…MFLI). Chlorophyll a contacts are provided by His-654, Met-662, and Tyr-670. Trp-671 lines the phylloquinone pocket. Residues 707-727 (LVGLAHFSVGYIFTYAAFLIA) form a helical membrane-spanning segment.

Belongs to the PsaA/PsaB family. As to quaternary structure, the PsaA/B heterodimer binds the P700 chlorophyll special pair and subsequent electron acceptors. PSI consists of a core antenna complex that captures photons, and an electron transfer chain that converts photonic excitation into a charge separation. The eukaryotic PSI reaction center is composed of at least 11 subunits. The cofactor is P700 is a chlorophyll a/chlorophyll a' dimer, A0 is one or more chlorophyll a, A1 is one or both phylloquinones and FX is a shared 4Fe-4S iron-sulfur center..

It is found in the plastid. Its subcellular location is the chloroplast thylakoid membrane. It catalyses the reaction reduced [plastocyanin] + hnu + oxidized [2Fe-2S]-[ferredoxin] = oxidized [plastocyanin] + reduced [2Fe-2S]-[ferredoxin]. PsaA and PsaB bind P700, the primary electron donor of photosystem I (PSI), as well as the electron acceptors A0, A1 and FX. PSI is a plastocyanin-ferredoxin oxidoreductase, converting photonic excitation into a charge separation, which transfers an electron from the donor P700 chlorophyll pair to the spectroscopically characterized acceptors A0, A1, FX, FA and FB in turn. Oxidized P700 is reduced on the lumenal side of the thylakoid membrane by plastocyanin. The sequence is that of Photosystem I P700 chlorophyll a apoprotein A2 from Oryza sativa (Rice).